The chain runs to 131 residues: Guanyl-specific ribonuclease F1 (131 aa).

Residues 1–25 form the signal peptide; the sequence is MLFFKSIASLAALVSLAVASPIESR. A Pyrrolidone carboxylic acid modification is found at glutamine 26. Intrachain disulfides connect cysteine 31–cysteine 127 and cysteine 49–cysteine 108. The active site involves histidine 65. The Proton acceptor role is filled by glutamate 83. Histidine 116 (proton donor) is an active-site residue.

This sequence belongs to the ribonuclease N1/T1 family.

It catalyses the reaction [RNA] containing guanosine + H2O = an [RNA fragment]-3'-guanosine-3'-phosphate + a 5'-hydroxy-ribonucleotide-3'-[RNA fragment].. The chain is Guanyl-specific ribonuclease F1 from Fusarium fujikuroi (Bakanae and foot rot disease fungus).